Consider the following 459-residue polypeptide: Putrescine aminotransferase (459 aa).

Pyridoxal 5'-phosphate contacts are provided by residues 150-151 and Gln274; that span reads GT. An N6-(pyridoxal phosphate)lysine modification is found at Lys300. Thr332 contributes to the pyridoxal 5'-phosphate binding site.

It belongs to the class-III pyridoxal-phosphate-dependent aminotransferase family. Putrescine aminotransferase subfamily. Pyridoxal 5'-phosphate serves as cofactor.

The enzyme catalyses an alkane-alpha,omega-diamine + 2-oxoglutarate = an omega-aminoaldehyde + L-glutamate. It carries out the reaction putrescine + 2-oxoglutarate = 1-pyrroline + L-glutamate + H2O. The catalysed reaction is cadaverine + 2-oxoglutarate = 5-aminopentanal + L-glutamate. The protein operates within amine and polyamine degradation; putrescine degradation; 4-aminobutanal from putrescine (transaminase route): step 1/1. In terms of biological role, catalyzes the aminotransferase reaction from putrescine to 2-oxoglutarate, leading to glutamate and 4-aminobutanal, which spontaneously cyclizes to form 1-pyrroline. This is the first step in one of two pathways for putrescine degradation, where putrescine is converted into 4-aminobutanoate (gamma-aminobutyrate or GABA) via 4-aminobutanal. Also functions as a cadaverine transaminase in a a L-lysine degradation pathway to succinate that proceeds via cadaverine, glutarate and L-2-hydroxyglutarate. The protein is Putrescine aminotransferase of Escherichia coli O7:K1 (strain IAI39 / ExPEC).